We begin with the raw amino-acid sequence, 440 residues long: MASLTVKAYLLGKEDAAREIRRFSFCCSPEPEAEAEAAAGPGPCERLLSRVAALFPALRPGGFQAHYRDEDGDLVAFSSDEELTMAMSYVKDDIFRIYIKEKKECRRDHRPPCAQEAPRNMVHPNVICDGCNGPVVGTRYKCSVCPDYDLCSVCEGKGLHRGHTKLAFPSPFGHLSEGFSHSRWLRKVKHGHFGWPGWEMGPPGNWSPRPPRAGEARPGPTAESASGPSEDPSVNFLKNVGESVAAALSPLGIEVDIDVEHGGKRSRLTPVSPESSSTEEKSSSQPSSCCSDPSKPGGNVEGATQSLAEQMRKIALESEGRPEEQMESDNCSGGDDDWTHLSSKEVDPSTGELQSLQMPESEGPSSLDPSQEGPTGLKEAALYPHLPPEADPRLIESLSQMLSMGFSDEGGWLTRLLQTKNYDIGAALDTIQYSKHPPPL.

An N-acetylalanine modification is found at Ala-2. Residues 2–50 (ASLTVKAYLLGKEDAAREIRRFSFCCSPEPEAEAEAAAGPGPCERLLSR) are interaction with LCK. The PB1 domain occupies 3–102 (SLTVKAYLLG…DIFRIYIKEK (100 aa)). Ser-24 carries the post-translational modification Phosphoserine. Residues 43-107 (PCERLLSRVA…YIKEKKECRR (65 aa)) are interaction with PRKCZ and dimerization. An interaction with PAWR region spans residues 50–80 (RVAALFPALRPGGFQAHYRDEDGDLVAFSSD). Lys-91 participates in a covalent cross-link: Glycyl lysine isopeptide (Lys-Gly) (interchain with G-Cter in ubiquitin). Residues 122–224 (VHPNVICDGC…EARPGPTAES (103 aa)) form an interaction with GABRR3 region. Residues 123 to 173 (HPNVICDGCNGPVVGTRYKCSVCPDYDLCSVCEGKGLHRGHTKLAFPSPFG) form a ZZ-type zinc finger. Zn(2+) is bound by residues Cys-128, Cys-131, Cys-142, and Cys-145. The residue at position 148 (Tyr-148) is a Phosphotyrosine. Residues Cys-151, Cys-154, His-160, and His-163 each coordinate Zn(2+). Ser-170 and Ser-176 each carry phosphoserine. The LIM protein-binding (LB) stretch occupies residues 170–220 (SPFGHLSEGFSHSRWLRKVKHGHFGWPGWEMGPPGNWSPRPPRAGEARPGP). A Glycyl lysine isopeptide (Lys-Gly) (interchain with G-Cter in ubiquitin) cross-link involves residue Lys-189. Residues 196 to 235 (PGWEMGPPGNWSPRPPRAGEARPGPTAESASGPSEDPSVN) form a disordered region. Phosphoserine is present on residues Ser-207, Ser-233, Ser-249, and Ser-266. The short motif at 228–233 (PSEDPS) is the TRAF6-binding element. Residues 264-390 (KRSRLTPVSP…ALYPHLPPEA (127 aa)) are disordered. Residue Thr-269 is modified to Phosphothreonine. Positions 269 to 440 (TPVSPESSST…IQYSKHPPPL (172 aa)) are interaction with NTRK1. Phosphoserine is present on residues Ser-272 and Ser-282. Positions 283–296 (SSQPSSCCSDPSKP) are enriched in low complexity. S-palmitoyl cysteine attachment occurs at residues Cys-289 and Cys-290. Residue Ser-306 is modified to Phosphoserine. A compositionally biased stretch (basic and acidic residues) spans 310–324 (QMRKIALESEGRPEE). Residues 321 to 342 (RPEEQMESDNCSGGDDDWTHLS) form an MAP1LC3B-binding region. Phosphoserine occurs at positions 328 and 332. Positions 336 to 341 (DDWTHL) match the LIR motif. The segment covering 337 to 347 (DWTHLSSKEVD) has biased composition (basic and acidic residues). The tract at residues 347-352 (DPSTGE) is interaction with KEAP1. Position 349 is a phosphoserine; by ULK1 (Ser-349). Positions 351 to 373 (GELQSLQMPESEGPSSLDPSQEG) are enriched in polar residues. 4 positions are modified to phosphoserine: Ser-355, Ser-361, Ser-365, and Ser-366. The 46-residue stretch at 389 to 434 (EADPRLIESLSQMLSMGFSDEGGWLTRLLQTKNYDIGAALDTIQYS) folds into the UBA domain. Ser-403 bears the Phosphoserine; by CK2, ULK1 and TBK1 mark. Ser-407 carries the post-translational modification Phosphoserine; by ULK1. N6-acetyllysine; alternate is present on residues Lys-420 and Lys-435. Residue Lys-420 forms a Glycyl lysine isopeptide (Lys-Gly) (interchain with G-Cter in ubiquitin); alternate linkage. Residue Lys-435 forms a Glycyl lysine isopeptide (Lys-Gly) (interchain with G-Cter in SUMO2); alternate linkage.

Homooligomer or heterooligomer; may form homotypic arrays. Dimerization interferes with ubiquitin binding. Component of a ternary complex with PAWR and PRKCZ. Forms a complex with JUB/Ajuba, PRKCZ and TRAF6. Identified in a complex with TRAF6 and CYLD. Identified in a heterotrimeric complex with ubiquitin and ZFAND5, where ZFAND5 and SQSTM1 both interact with the same ubiquitin molecule. Interacts (via LIR motif) with MAP1LC3A and MAP1LC3B, as well as with other ATG8 family members, including GABARAP, GABARAPL1 and GABARAPL2; these interactions are necessary for the recruitment MAP1 LC3 family members to inclusion bodies containing polyubiquitinated protein aggregates and for their degradation by autophagy. Interacts directly with PRKCI and PRKCZ. Interacts with EBI3, LCK, RASA1, NR2F2, NTRK1, NTRK2, NTRK3, NBR1, MAP2K5 and MAPKAPK5. Upon TNF-alpha stimulation, interacts with RIPK1 probably bridging IKBKB to the TNF-R1 complex composed of TNF-R1/TNFRSF1A, TRADD and RIPK1. Interacts with the proteasome subunits PSMD4 and PSMC2. Interacts with TRAF6. Interacts with 'Lys-63'-linked polyubiquitinated MAPT/TAU. Interacts with FHOD3. Interacts with CYLD. Interacts with SESN1. Interacts with SESN2. Interacts with ULK1. Interacts with UBD. Interacts with WDR81; the interaction is direct and regulates the interaction of SQSTM1 with ubiquitinated proteins. Interacts with WDFY3; this interaction is required to recruit WDFY3 to cytoplasmic bodies and to PML bodies. Interacts with LRRC25. Interacts with STING1; leading to relocalization of STING1 to autophagosomes. Interacts (when phosphorylated at Ser-349) with KEAP1; the interaction is direct and inactivates the BCR(KEAP1) complex by sequestering KEAP1 in inclusion bodies, promoting its degradation. Interacts with MOAP1; promoting dissociation of SQSTM1 inclusion bodies that sequester KEAP1. Interacts with GBP1. Interacts with TAX1BP1. Interacts with (ubiquitinated) PEX5; specifically binds PEX5 ubiquitinated at 'Lys-209' in response to reactive oxygen species (ROS). Interacts (via PB1 domain) with TNS2; the interaction leads to sequestration of TNS2 in cytoplasmic aggregates with SQSTM1 and promotes TNS2 ubiquitination and proteasomal degradation. Interacts with IRS1; the interaction is disrupted by the presence of tensin TNS2. Interacts with TRIM5. Interacts with TRIM11 (when ubiquitinated); promoting AIM2 recruitment to autophagosomes and autophagy-dependent degradation of AIM2. Interacts with TRIM13. Interacts with TRIM16. Interacts with TRIM23. Interacts with TRIM50. Interacts with TRIM55. Interacts with ECSIT; this interaction inhibits TLR4 signaling via functional regulation of the TRAF6-ECSIT complex. Interacts with GABRR1, GABRR2 and GABRR3. Interacts with WDR83. Interacts with GRB2. Interacts with USP12; the interaction is independent of USP12 deubiquitinase activity and may be involved in regulation of autophagic flux. Interacts with ASB6. Post-translationally, phosphorylation at Ser-407 by ULK1 destabilizes the UBA dimer interface and increases binding affinity to ubiquitinated proteins. Phosphorylation at Ser-407 also primes for subsequent phosphorylation at Ser-403. Phosphorylation at Ser-403 by CK2 or ULK1 promotes binding to ubiquitinated proteins by increasing the affinity between the UBA domain and polyubiquitin chains. Phosphorylation at Ser-403 by ULK1 is stimulated by SESN2. Phosphorylated at Ser-403 by TBK1, leading to promote relocalization of 'Lys-63'-linked ubiquitinated STING1 to autophagosomes. Phosphorylation at Ser-349 by ULK1 promotes interaction with KEAP1 and inactivation of the BCR(KEAP1) complex, promoting NFE2L2/NRF2 nuclear accumulation and expression of phase II detoxifying enzymes. Phosphorylated in vitro by TTN. Ubiquitinated by UBE2J1 and RNF26 at Lys-435: ubiquitinated SQSTM1 attracts specific vesicle-associated adapters, forming a molecular bridge that restrains cognate vesicles in the perinuclear region and organizes the endosomal pathway for efficient cargo transport. Ubiquitination by UBE2D2 and UBE2D3 increases its ability to bind polyubiquitin chains by destabilizing the UBA dimer interface. Deubiquitination by USP15 releases target vesicles for fast transport into the cell periphery. Ubiquitinated by the BCR(KEAP1) complex at Lys-420, increasing SQSTM1 sequestering activity and promoting its degradation. Ubiquitinated via 'Lys-29' and 'Lys-33'-linked polyubiquitination leading to xenophagic targeting of bacteria and inhibition of their replication. In terms of processing, acetylated at Lys-420 and Lys-435 by KAT5/TIP60, promotes activity by destabilizing the UBA dimer interface and increases binding affinity to ubiquitinated proteins. Deacetylated by HDAC6. Post-translationally, palmitoylation at Cys-289 and Cys-290 by ZDHHC19 is required for efficient autophagic degradation of SQSTM1-cargo complexes by promoting affinity for ATG8 proteins and recruitment of p62 bodies to autophagosomes. Dealmitoylated at Cys-289 and Cys-290 by LYPLA1. (Microbial infection) Cleaved by S.pyogenes SpeB protease; leading to its degradation. Degradation by SpeB prevents autophagy, promoting to S.pyogenes intracellular replication. In terms of processing, (Microbial infection) Deubiquitinated by Epstein-Barr virus BPLF1; leading to inhibition of the recruitment of MAP1LC3A/LC3 to SQSTM1-positive structures. As to expression, ubiquitously expressed.

It is found in the cytoplasmic vesicle. The protein resides in the autophagosome. Its subcellular location is the preautophagosomal structure. It localises to the cytoplasm. The protein localises to the cytosol. It is found in the nucleus. The protein resides in the PML body. Its subcellular location is the late endosome. It localises to the lysosome. The protein localises to the endoplasmic reticulum. It is found in the myofibril. The protein resides in the sarcomere. Molecular adapter required for selective macroautophagy (aggrephagy) by acting as a bridge between polyubiquitinated proteins and autophagosomes. Promotes the recruitment of ubiquitinated cargo proteins to autophagosomes via multiple domains that bridge proteins and organelles in different steps. SQSTM1 first mediates the assembly and removal of ubiquitinated proteins by undergoing liquid-liquid phase separation upon binding to ubiquitinated proteins via its UBA domain, leading to the formation of insoluble cytoplasmic inclusions, known as p62 bodies. SQSTM1 then interacts with ATG8 family proteins on autophagosomes via its LIR motif, leading to p62 body recruitment to autophagosomes, followed by autophagic clearance of ubiquitinated proteins. SQSTM1 is itself degraded along with its ubiquitinated cargos. Also required to recruit ubiquitinated proteins to PML bodies in the nucleus. Also involved in autophagy of peroxisomes (pexophagy) in response to reactive oxygen species (ROS) by acting as a bridge between ubiquitinated PEX5 receptor and autophagosomes. Acts as an activator of the NFE2L2/NRF2 pathway via interaction with KEAP1: interaction inactivates the BCR(KEAP1) complex by sequestering the complex in inclusion bodies, promoting nuclear accumulation of NFE2L2/NRF2 and subsequent expression of cytoprotective genes. Promotes relocalization of 'Lys-63'-linked ubiquitinated STING1 to autophagosomes. Involved in endosome organization by retaining vesicles in the perinuclear cloud: following ubiquitination by RNF26, attracts specific vesicle-associated adapters, forming a molecular bridge that restrains cognate vesicles in the perinuclear region and organizes the endosomal pathway for efficient cargo transport. Sequesters tensin TNS2 into cytoplasmic puncta, promoting TNS2 ubiquitination and proteasomal degradation. May regulate the activation of NFKB1 by TNF-alpha, nerve growth factor (NGF) and interleukin-1. May play a role in titin/TTN downstream signaling in muscle cells. Adapter that mediates the interaction between TRAF6 and CYLD. The protein is Sequestosome-1 of Homo sapiens (Human).